The following is a 650-amino-acid chain: Chaperone protein DnaK (650 aa).

Phosphothreonine; by autocatalysis is present on Thr-200. Residues Ala-614–Ala-635 form a disordered region.

Belongs to the heat shock protein 70 family.

In terms of biological role, acts as a chaperone. The polypeptide is Chaperone protein DnaK (Burkholderia lata (strain ATCC 17760 / DSM 23089 / LMG 22485 / NCIMB 9086 / R18194 / 383)).